A 378-amino-acid polypeptide reads, in one-letter code: Chaperone protein DnaJ (378 aa).

The J domain maps to 5–69 (EFYDRLGVSK…QKRAAYDQYG (65 aa)). Residues 135-217 (GTEKEVKYHR…CHGTGHEKQA (83 aa)) form a CR-type zinc finger. The Zn(2+) site is built by C148, C151, C165, C168, C191, C194, C205, and C208. 4 CXXCXGXG motif repeats span residues 148–155 (CRTCNGSG), 165–172 (CGRCHGAG), 191–198 (CDVCHGRG), and 205–212 (CTTCHGTG).

The protein belongs to the DnaJ family. In terms of assembly, homodimer. It depends on Zn(2+) as a cofactor.

Its subcellular location is the cytoplasm. Functionally, participates actively in the response to hyperosmotic and heat shock by preventing the aggregation of stress-denatured proteins and by disaggregating proteins, also in an autonomous, DnaK-independent fashion. Unfolded proteins bind initially to DnaJ; upon interaction with the DnaJ-bound protein, DnaK hydrolyzes its bound ATP, resulting in the formation of a stable complex. GrpE releases ADP from DnaK; ATP binding to DnaK triggers the release of the substrate protein, thus completing the reaction cycle. Several rounds of ATP-dependent interactions between DnaJ, DnaK and GrpE are required for fully efficient folding. Also involved, together with DnaK and GrpE, in the DNA replication of plasmids through activation of initiation proteins. The sequence is that of Chaperone protein DnaJ from Streptococcus pneumoniae serotype 4 (strain ATCC BAA-334 / TIGR4).